We begin with the raw amino-acid sequence, 352 residues long: MTIALGKVDEKRGWFDNVDDWLKRDRFVFVGWSGILLFPCAYFALGGWLTGTTFVSSWYTHGLASSYLEGCNFLTSAVSTPSNSMAHSLLLLWGPEAQGDFTRWCQLGGLWTFVALHGAFGLIGFMLRQFEIARAVQIRPYNAIAFSAPIAVFVSVFLIYPLGQSGWFFAPSFGVAGIFRFILFFQGFHNWTLNPFHMMGVAGVLGAALLCAIHGATVENTLFEDGDGSNTFRAFNPTQAEETYSMVTANRFWSQIFGVAFSNKRWLHFFMLFVPVTGLWMSALGVVGLALNLRAYDFVSQEIRAAEDPEFETFYTKNILLNEGIRAWMAAQDQPHENLVFPEEVLPRGNAL.

The residue at position 2 (Thr2) is an N-acetylthreonine. At Thr2 the chain carries Phosphothreonine. The chain crosses the membrane as a helical span at residues 40-60 (CAYFALGGWLTGTTFVSSWYT). His117 contacts chlorophyll a. Residues 124–140 (GFMLRQFEIARAVQIRP) traverse the membrane as a helical segment. Gln129 and Asn142 together coordinate pheophytin a. Residues 152-165 (VFVSVFLIYPLGQS) form a helical membrane-spanning segment. His197 contacts chlorophyll a. A helical membrane pass occupies residues 207 to 227 (AALLCAIHGATVENTLFEDGD). A plastoquinone contacts are provided by His214 and Phe261. His214 lines the Fe cation pocket. A Fe cation-binding site is contributed by His268. The helical transmembrane segment at 278–294 (GLWMSALGVVGLALNLR) threads the bilayer.

It belongs to the reaction center PufL/M/PsbA/D family. In terms of assembly, PSII is composed of 1 copy each of membrane proteins PsbA, PsbB, PsbC, PsbD, PsbE, PsbF, PsbH, PsbI, PsbJ, PsbK, PsbL, PsbM, PsbT, PsbX, PsbY, PsbZ, Psb30/Ycf12, at least 3 peripheral proteins of the oxygen-evolving complex and a large number of cofactors. It forms dimeric complexes. Requires The D1/D2 heterodimer binds P680, chlorophylls that are the primary electron donor of PSII, and subsequent electron acceptors. It shares a non-heme iron and each subunit binds pheophytin, quinone, additional chlorophylls, carotenoids and lipids. There is also a Cl(-1) ion associated with D1 and D2, which is required for oxygen evolution. The PSII complex binds additional chlorophylls, carotenoids and specific lipids. as cofactor.

The protein localises to the plastid. It is found in the chloroplast thylakoid membrane. It carries out the reaction 2 a plastoquinone + 4 hnu + 2 H2O = 2 a plastoquinol + O2. Functionally, photosystem II (PSII) is a light-driven water:plastoquinone oxidoreductase that uses light energy to abstract electrons from H(2)O, generating O(2) and a proton gradient subsequently used for ATP formation. It consists of a core antenna complex that captures photons, and an electron transfer chain that converts photonic excitation into a charge separation. The D1/D2 (PsbA/PsbD) reaction center heterodimer binds P680, the primary electron donor of PSII as well as several subsequent electron acceptors. D2 is needed for assembly of a stable PSII complex. This is Photosystem II D2 protein from Ostreococcus tauri.